We begin with the raw amino-acid sequence, 210 residues long: dTTP/UTP pyrophosphatase (210 aa).

D85 (proton acceptor) is an active-site residue.

Belongs to the Maf family. YhdE subfamily. Requires a divalent metal cation as cofactor.

The protein localises to the cytoplasm. It catalyses the reaction dTTP + H2O = dTMP + diphosphate + H(+). It carries out the reaction UTP + H2O = UMP + diphosphate + H(+). Its function is as follows. Nucleoside triphosphate pyrophosphatase that hydrolyzes dTTP and UTP. May have a dual role in cell division arrest and in preventing the incorporation of modified nucleotides into cellular nucleic acids. This is dTTP/UTP pyrophosphatase from Saccharophagus degradans (strain 2-40 / ATCC 43961 / DSM 17024).